A 135-amino-acid polypeptide reads, in one-letter code: ATP synthase epsilon chain (135 aa).

Belongs to the ATPase epsilon chain family. In terms of assembly, F-type ATPases have 2 components, CF(1) - the catalytic core - and CF(0) - the membrane proton channel. CF(1) has five subunits: alpha(3), beta(3), gamma(1), delta(1), epsilon(1). CF(0) has three main subunits: a, b and c.

Its subcellular location is the cell inner membrane. Its function is as follows. Produces ATP from ADP in the presence of a proton gradient across the membrane. This chain is ATP synthase epsilon chain, found in Hyphomonas neptunium (strain ATCC 15444).